A 367-amino-acid polypeptide reads, in one-letter code: 4-hydroxyphenylpyruvate dioxygenase (367 aa).

VOC domains are found at residues 3-135 and 166-324; these read GFDH…FVDR and LIDH…IFTN. Fe cation contacts are provided by histidine 169, histidine 252, and glutamate 335.

This sequence belongs to the 4HPPD family. The cofactor is Fe cation.

The enzyme catalyses 3-(4-hydroxyphenyl)pyruvate + O2 = homogentisate + CO2. It participates in amino-acid degradation; L-phenylalanine degradation; acetoacetate and fumarate from L-phenylalanine: step 3/6. In terms of biological role, key enzyme in the degradation of tyrosine. The sequence is that of 4-hydroxyphenylpyruvate dioxygenase (hpd) from Dictyostelium discoideum (Social amoeba).